Reading from the N-terminus, the 554-residue chain is Inactive sesquithujene synthase B (554 aa).

Mg(2+) contacts are provided by Asp-308 and Asp-312. Residues Asp-308, Asp-312, Arg-449, and Asn-452 each coordinate substrate. The DDXXD motif motif lies at 308 to 312 (DDMFD). Mg(2+) is bound by residues Asn-452, Ser-456, and Glu-460.

Belongs to the terpene synthase family. As to quaternary structure, monomer. The cofactor is Mg(2+). Mn(2+) is required as a cofactor.

Its subcellular location is the cytoplasm. It functions in the pathway secondary metabolite biosynthesis; terpenoid biosynthesis. Its function is as follows. Non-functional sesquiterpene synthase having less than 1% of the activity found in TPS5A. The sequence is that of Inactive sesquithujene synthase B from Zea mays (Maize).